The sequence spans 302 residues: Sulfate adenylyltransferase subunit 2 (302 aa).

It belongs to the PAPS reductase family. CysD subfamily. Heterodimer composed of CysD, the smaller subunit, and CysN.

It catalyses the reaction sulfate + ATP + H(+) = adenosine 5'-phosphosulfate + diphosphate. It participates in sulfur metabolism; hydrogen sulfide biosynthesis; sulfite from sulfate: step 1/3. In terms of biological role, with CysN forms the ATP sulfurylase (ATPS) that catalyzes the adenylation of sulfate producing adenosine 5'-phosphosulfate (APS) and diphosphate, the first enzymatic step in sulfur assimilation pathway. APS synthesis involves the formation of a high-energy phosphoric-sulfuric acid anhydride bond driven by GTP hydrolysis by CysN coupled to ATP hydrolysis by CysD. This Erwinia tasmaniensis (strain DSM 17950 / CFBP 7177 / CIP 109463 / NCPPB 4357 / Et1/99) protein is Sulfate adenylyltransferase subunit 2.